The primary structure comprises 887 residues: Tiger protein O1 (887 aa).

The signal sequence occupies residues 1–21; sequence MEKKLLIIVIVFLFSTIQVFC. Residues 22-845 are Extracellular-facing; it reads RIDDKTFVIS…SLSKKSIILL (824 aa). 24 N-linked (GlcNAc...) asparagine glycosylation sites follow: Asn-32, Asn-70, Asn-186, Asn-207, Asn-219, Asn-259, Asn-297, Asn-314, Asn-325, Asn-338, Asn-354, Asn-393, Asn-431, Asn-588, Asn-629, Asn-652, Asn-687, Asn-710, Asn-720, Asn-730, Asn-775, Asn-788, Asn-811, and Asn-816. One can recognise an IPT/TIG 1 domain in the interval 277–365; it reads NSVPYSKGGL…TNENKLLFNY (89 aa). Residues 710-767 form the IPT/TIG 2 domain; sequence NTSSINVNGGNLTIYGKNFYNVSNIKVEVDNQLKCNKIEFINLNSLTCFLPPFIETLF. The disordered stretch occupies residues 811 to 835; that stretch reads NDTSENSTNDILNHEKNNNNQKDGS. Residues 846 to 866 traverse the membrane as a helical segment; that stretch reads SILLPSFIILIVSLAIVILVI. Over 867-887 the chain is Cytoplasmic; sequence KRNKTKHSKNMSSKEKELMKQ.

It is found in the membrane. The sequence is that of Tiger protein O1 (tgrO1) from Dictyostelium discoideum (Social amoeba).